The chain runs to 315 residues: FAD-linked oxidoreductase sthB (315 aa).

One can recognise an FAD-binding PCMH-type domain in the interval 19–201 (QPCSLGNYVS…LSMTSRVHAD (183 aa)).

It belongs to the oxygen-dependent FAD-linked oxidoreductase family.

It carries out the reaction betaenone C = betaenone A. The enzyme catalyses stemphyloxin I = stemphyloxin II. It functions in the pathway mycotoxin biosynthesis. Its function is as follows. FAD-linked oxidoreductase; part of the gene cluster that mediates the biosynthesis of the phytotoxin stemphyloxin II. The first step of the pathway is the synthesis of dehydroprobetaenone I by the polyketide synthase sthA and the enoyl reductase sthE via condensation of one acetyl-CoA starter unit with 7 malonyl-CoA units and 5 methylations. The C-terminal reductase (R) domain of sthA catalyzes the reductive release of the polyketide chain. Because sthA lacks a designated enoylreductase (ER) domain, the required activity is provided the enoyl reductase sthE. The short-chain dehydrogenase/reductase sthC then catalyzes reduction of dehydroprobetaenone I to probetaenone I. The cytochrome P450 monooxygenase sthF catalyzes successive epoxidation, oxidation (resulting from epoxide opening) and hydroxylation to install a tertiary alcohol in the decaline ring to yield betaenone C from dehydroprobetaenone I and betaenone B from probetaenone I. The FAD-linked oxidoreductase sthB is responsible for the conversion of betaenone C to betaenone A via an intramolecular aldol reaction between C-1 and C-17 to form the bridged tricyclic system in betaenone A. Finally, the cytochrome P450 monooxygenase sthD catalyzes the hydroxylation of C-15 to afford the final metabolite stemphyloxin II. The chain is FAD-linked oxidoreductase sthB from Phaeosphaeria nodorum (strain SN15 / ATCC MYA-4574 / FGSC 10173) (Glume blotch fungus).